We begin with the raw amino-acid sequence, 361 residues long: Phenylalanine--tRNA ligase alpha subunit (361 aa).

Glutamate 260 provides a ligand contact to Mg(2+).

It belongs to the class-II aminoacyl-tRNA synthetase family. Phe-tRNA synthetase alpha subunit type 1 subfamily. As to quaternary structure, tetramer of two alpha and two beta subunits. Requires Mg(2+) as cofactor.

The protein resides in the cytoplasm. The enzyme catalyses tRNA(Phe) + L-phenylalanine + ATP = L-phenylalanyl-tRNA(Phe) + AMP + diphosphate + H(+). The sequence is that of Phenylalanine--tRNA ligase alpha subunit from Chelativorans sp. (strain BNC1).